The primary structure comprises 1120 residues: Terminal uridylyltransferase 1 (1120 aa).

2 disordered regions span residues 1 to 156 (MSKY…SAVE) and 196 to 221 (AALI…PHTP). Over residues 7–16 (LFNQGTKDGT) the composition is skewed to polar residues. The span at 17 to 59 (NASSGSEANSANITSSSAPASSTNTSSPTSSESAVVSPPASTS) shows a compositional bias: low complexity. Residues 60-70 (PRRRLIHRRHG) are compositionally biased toward basic residues. Basic and acidic residues predominate over residues 90–103 (NEEKHENFISDSVH). Residues 118-128 (LTTSGSETVMS) show a composition bias toward polar residues. 2 stretches are compositionally biased toward low complexity: residues 134–154 (AFEA…STSA) and 207–217 (SSAVSSSSSGS). The C2H2-type; atypical zinc-finger motif lies at 222–253 (PRLFTCDMCLQYVSTSYEALEQHALDQHGDAL). Residues cysteine 227, cysteine 230, histidine 244, and histidine 249 each contribute to the Zn(2+) site. Residues serine 330 and 341-344 (SDID) each bind UTP. The Mg(2+) site is built by aspartate 342 and aspartate 344. Arginine 390 is an RNA binding site. Aspartate 548 contributes to the Mg(2+) binding site. UTP contacts are provided by residues 555–559 (GIRNS), lysine 580, lysine 584, and 598–599 (SY). The PAP-associated domain occupies 659–697 (GELLLGFFYYYAFEFDWVNHVVSLNRPGITTKASLGWDV). The important for catalytic activity and RNA binding stretch occupies residues 750–1120 (GMMASSASAA…ARRVLRLLFR (371 aa)). The Nucleotide recognition motif (NRM) motif lies at 773-782 (IEDPYEENLN). The tract at residues 800–900 (YRGLLSLLKD…LLSDLEAAFL (101 aa)) is involved in oligomerization. The tract at residues 1047-1076 (PSTTTQGEDPLASGTCEQGGVSPSLPTGAP) is disordered.

Belongs to the DNA polymerase type-B-like family. Homotetramer. Part of a 700kDa complex. Interacts with p45 and p50 RNA ligases. The cofactor is Mg(2+). Requires Mn(2+) as cofactor.

Its subcellular location is the mitochondrion. It carries out the reaction RNA(n) + UTP = RNA(n)-3'-uridine ribonucleotide + diphosphate. Its activity is regulated as follows. Zinc-binding is required for catalytic activity. In terms of biological role, terminal uridylyltransferase which is involved in the post-transcriptional editing of mitochondrial RNA, a process involving the addition and deletion of uridine (U) nucleotides in the pre-mRNA. Specifically, catalyzes the addition of Us to the 3'-hydroxyl group of guided RNA (gRNA), with a preference for RNAs terminating in 6 Us, but also can add Us to RNAs terminating in 6 adenines (A), 6 cytosines (C), or 6 guanines (G). Can mediate RNA-independent UTP polymerization in vitro. Can mediate pyrophosphate-dependent degradation of synthetic RNA ending with U residues in vitro. The polypeptide is Terminal uridylyltransferase 1 (Leishmania tarentolae (Sauroleishmania tarentolae)).